Here is a 291-residue protein sequence, read N- to C-terminus: Glycolipid transfer protein domain-containing protein 2 (291 aa).

A glycan (N-linked (GlcNAc...) asparagine) is linked at Asn-276.

This sequence belongs to the GLTP family.

This is Glycolipid transfer protein domain-containing protein 2 (GLTPD2) from Homo sapiens (Human).